The primary structure comprises 119 residues: Large ribosomal subunit protein bL20 (119 aa).

This sequence belongs to the bacterial ribosomal protein bL20 family.

Its function is as follows. Binds directly to 23S ribosomal RNA and is necessary for the in vitro assembly process of the 50S ribosomal subunit. It is not involved in the protein synthesizing functions of that subunit. The chain is Large ribosomal subunit protein bL20 from Shewanella amazonensis (strain ATCC BAA-1098 / SB2B).